The sequence spans 396 residues: Tryptophan synthase beta chain (396 aa).

At Lys86 the chain carries N6-(pyridoxal phosphate)lysine.

This sequence belongs to the TrpB family. Tetramer of two alpha and two beta chains. The cofactor is pyridoxal 5'-phosphate.

The catalysed reaction is (1S,2R)-1-C-(indol-3-yl)glycerol 3-phosphate + L-serine = D-glyceraldehyde 3-phosphate + L-tryptophan + H2O. It participates in amino-acid biosynthesis; L-tryptophan biosynthesis; L-tryptophan from chorismate: step 5/5. Its function is as follows. The beta subunit is responsible for the synthesis of L-tryptophan from indole and L-serine. The polypeptide is Tryptophan synthase beta chain (Blochmanniella pennsylvanica (strain BPEN)).